A 620-amino-acid chain; its full sequence is uncharacterized protein (620 aa).

2 stretches are compositionally biased toward low complexity: residues 278-290 (RPPS…AGEP) and 301-319 (ASTA…TRPT). Residues 278-620 (RPPSGSGEAA…KSQPPAAHTA (343 aa)) are disordered. Over residues 336 to 411 (ARPESEEQTD…QESQVARRDE (76 aa)) the composition is skewed to basic and acidic residues. Composition is skewed to pro residues over residues 446 to 470 (VPGP…PPMT) and 481 to 500 (RCPP…PPRP). 2 stretches are compositionally biased toward low complexity: residues 501 to 512 (SSDTPLSAVSRP) and 522 to 541 (TARV…YSPA). Residues 542-551 (PLSPPSPVSP) are compositionally biased toward pro residues. Residues 597–607 (SVPSSASPSAS) show a composition bias toward low complexity.

It belongs to the herpesviridae US22 family.

This is an uncharacterized protein from Homo sapiens (Human).